Consider the following 341-residue polypeptide: 5-formaminoimidazole-4-carboxamide-1-(beta)-D-ribofuranosyl 5'-monophosphate synthetase (341 aa).

Residues His10 and Thr77 each coordinate 5-amino-1-(5-phospho-beta-D-ribosyl)imidazole-4-carboxamide. The ATP-grasp domain maps to 106–317 (DRSLKERLMR…YYGLLFDEPI (212 aa)). ATP-binding positions include 132–188 (DTLV…VLAY) and Glu210. Residue Asn238 participates in 5-amino-1-(5-phospho-beta-D-ribosyl)imidazole-4-carboxamide binding. Mg(2+)-binding residues include Glu277 and Glu290.

This sequence belongs to the phosphohexose mutase family. Mg(2+) is required as a cofactor. Requires Mn(2+) as cofactor.

It catalyses the reaction 5-amino-1-(5-phospho-beta-D-ribosyl)imidazole-4-carboxamide + formate + ATP = 5-formamido-1-(5-phospho-D-ribosyl)imidazole-4-carboxamide + ADP + phosphate. The protein operates within purine metabolism; IMP biosynthesis via de novo pathway; 5-formamido-1-(5-phospho-D-ribosyl)imidazole-4-carboxamide from 5-amino-1-(5-phospho-D-ribosyl)imidazole-4-carboxamide (formate route): step 1/1. In terms of biological role, catalyzes the ATP- and formate-dependent formylation of 5-aminoimidazole-4-carboxamide-1-beta-d-ribofuranosyl 5'-monophosphate (AICAR) to 5-formaminoimidazole-4-carboxamide-1-beta-d-ribofuranosyl 5'-monophosphate (FAICAR) in the absence of folates. The protein is 5-formaminoimidazole-4-carboxamide-1-(beta)-D-ribofuranosyl 5'-monophosphate synthetase of Cenarchaeum symbiosum (strain A).